The primary structure comprises 356 residues: Non-functional pseudokinase ZRK15 (356 aa).

The Protein kinase domain occupies 62–356 (NRVSELFDEI…SSSSCGETSL (295 aa)). ATP contacts are provided by residues 68–76 (FDEIPYDWY) and lysine 94.

This sequence belongs to the protein kinase superfamily. Ser/Thr protein kinase family. ZRK subfamily. As to quaternary structure, interacts with RPP13L4/ZAR1.

The chain is Non-functional pseudokinase ZRK15 from Arabidopsis thaliana (Mouse-ear cress).